The chain runs to 96 residues: Class I hydrophobin 3 (96 aa).

Residues 1–18 (MQFAKIASVLAMAAAAVA) form the signal peptide. 4 disulfides stabilise this stretch: C43/C72, C51/C66, C52/C57, and C73/C92.

The protein belongs to the fungal hydrophobin family.

It localises to the secreted. It is found in the cell wall. Its function is as follows. Aerial growth, conidiation, and dispersal of filamentous fungi in the environment rely upon a capability of their secreting small amphipathic proteins called hydrophobins (HPBs) with low sequence identity. Class I can self-assemble into an outermost layer of rodlet bundles on aerial cell surfaces, conferring cellular hydrophobicity that supports fungal growth, development and dispersal; whereas Class II form highly ordered films at water-air interfaces through intermolecular interactions but contribute nothing to the rodlet structure. Does not seem to be important for the ability to cause seedling disease. This chain is Class I hydrophobin 3, found in Gibberella moniliformis (Maize ear and stalk rot fungus).